The sequence spans 344 residues: Dihydroorotase (344 aa).

Zn(2+) contacts are provided by His-14 and His-16. Residues 16-18 (HLR) and Asn-42 each bind substrate. Lys-100, His-137, and His-175 together coordinate Zn(2+). Residue Lys-100 is modified to N6-carboxylysine. His-137 is a substrate binding site. Residue Leu-220 participates in substrate binding. Residue Asp-248 participates in Zn(2+) binding. The active site involves Asp-248. 2 residues coordinate substrate: His-252 and Ala-264.

It belongs to the metallo-dependent hydrolases superfamily. DHOase family. Class II DHOase subfamily. In terms of assembly, homodimer. Requires Zn(2+) as cofactor.

It catalyses the reaction (S)-dihydroorotate + H2O = N-carbamoyl-L-aspartate + H(+). It functions in the pathway pyrimidine metabolism; UMP biosynthesis via de novo pathway; (S)-dihydroorotate from bicarbonate: step 3/3. In terms of biological role, catalyzes the reversible cyclization of carbamoyl aspartate to dihydroorotate. This is Dihydroorotase from Ralstonia nicotianae (strain ATCC BAA-1114 / GMI1000) (Ralstonia solanacearum).